The chain runs to 103 residues: Nucleoid-associated protein Anae109_3761 (103 aa).

It belongs to the YbaB/EbfC family. As to quaternary structure, homodimer.

It is found in the cytoplasm. Its subcellular location is the nucleoid. Its function is as follows. Binds to DNA and alters its conformation. May be involved in regulation of gene expression, nucleoid organization and DNA protection. This chain is Nucleoid-associated protein Anae109_3761, found in Anaeromyxobacter sp. (strain Fw109-5).